The sequence spans 446 residues: MTQLPSVSELINRTGSIGSSSNITRVPPMTTTSATNTTTAATATTVTSTTPRSENSYSPNSPYSLPTRPSNTSLTNYSAGSGITVASSSFQFSQPSPGRSKHNSTSSQSSSGDSFQQHQSNPSGVSMSSNTSPRTSIVQSMSSVPTPPSTGPAPQQFVYQESQLPVQPPPQQQQLQQPPPPPPQQQQHIYPQQQPNFPYHNNFVSPPTYTTAYPQYYYQPVMTPPHHQPHQQAPIHLANNVSILQSQAVMQNAYPTTHYLQHVGPHHIYANVNSQVYYQDMAREEANKALINKRRIIKRRTRTGCLTCRKRRIKCDERKPTCFNCERSKKSCLGYQDLSKLPPRKRNRDTSLDLPDGNQQQQQQQQNQQSIVGGAGNVSDEPHNETHQITSISGSSTNSRNLDMMIPQSFRNNISSQPINFYGPVATTASGASAVINRVSVADLLK.

A compositionally biased stretch (polar residues) spans 1 to 24 (MTQLPSVSELINRTGSIGSSSNIT). The segment at 1-203 (MTQLPSVSEL…QPNFPYHNNF (203 aa)) is disordered. The span at 30 to 64 (TTTSATNTTTAATATTVTSTTPRSENSYSPNSPYS) shows a compositional bias: low complexity. A compositionally biased stretch (polar residues) spans 67 to 86 (TRPSNTSLTNYSAGSGITVA). Composition is skewed to low complexity over residues 87-97 (SSSFQFSQPSP) and 104-120 (STSS…QHQS). Over residues 121–144 (NPSGVSMSSNTSPRTSIVQSMSSV) the composition is skewed to polar residues. Positions 166-184 (VQPPPQQQQLQQPPPPPPQ) are enriched in pro residues. Residues 185 to 195 (QQQHIYPQQQP) show a composition bias toward low complexity. The segment at residues 305–332 (CLTCRKRRIKCDERKPTCFNCERSKKSC) is a DNA-binding region (zn(2)-C6 fungal-type). A disordered region spans residues 336-402 (QDLSKLPPRK…SGSSTNSRNL (67 aa)). The span at 358-369 (NQQQQQQQQNQQ) shows a compositional bias: low complexity. A compositionally biased stretch (polar residues) spans 387-401 (HQITSISGSSTNSRN).

It is found in the nucleus. In terms of biological role, transcriptional regulator of the switch between 2 heritable states, the white and opaque states. These 2 cell types differ in many characteristics, including cell structure, mating competence, and virulence. Each state is heritable for many generations, and switching between states occurs stochastically, at low frequency. WOR2 is necessary for the stability of the opaque state phenotypic switching from the white to the opaque phase is a necessary step for mating. Plays a role in cell adhesion and pseudohyphal growth. This chain is White-opaque regulator 2 (WOR2), found in Candida albicans (strain SC5314 / ATCC MYA-2876) (Yeast).